We begin with the raw amino-acid sequence, 269 residues long: Tryptophan synthase alpha chain (269 aa).

Residues E49 and D60 each act as proton acceptor in the active site.

It belongs to the TrpA family. As to quaternary structure, tetramer of two alpha and two beta chains.

It carries out the reaction (1S,2R)-1-C-(indol-3-yl)glycerol 3-phosphate + L-serine = D-glyceraldehyde 3-phosphate + L-tryptophan + H2O. It functions in the pathway amino-acid biosynthesis; L-tryptophan biosynthesis; L-tryptophan from chorismate: step 5/5. The alpha subunit is responsible for the aldol cleavage of indoleglycerol phosphate to indole and glyceraldehyde 3-phosphate. In Actinobacillus succinogenes (strain ATCC 55618 / DSM 22257 / CCUG 43843 / 130Z), this protein is Tryptophan synthase alpha chain.